Reading from the N-terminus, the 243-residue chain is Sec-independent protein translocase protein TATB, chloroplastic (243 aa).

A chloroplast-targeting transit peptide spans 1–67 (MTPTANLLLP…SRTRRRNVIC (67 aa)). Over 68–69 (AS) the chain is Lumenal. Residues 70 to 90 (LFGVGAPEALVIGVVALLVFG) form a helical membrane-spanning segment. At 91–243 (PKGLAEVARN…NKSQKAEGER (153 aa)) the chain is on the stromal side. 2 disordered regions span residues 129–165 (EIGI…PAPY) and 178–243 (IAAS…EGER). Composition is skewed to polar residues over residues 135-152 (VSQS…NQQP) and 187-204 (NPQQ…PTTP).

This sequence belongs to the TatB family. In thylakoid membranes, TATC and TATB form a large receptor complex, containing about eight TATC-TATB pairs, which binds the precursor protein. Twin arginine signal peptide promotes pH-triggered docking of TATA oligomers to TATC-TATB receptor complex, inducing a conformational switch of TATA that results in activation of the translocase. TATA dissociates from TATC-TATB upon completion of translocation.

The protein localises to the plastid. It is found in the chloroplast thylakoid membrane. Its function is as follows. Part of the twin-arginine translocation (Tat) system that transports large folded proteins containing a characteristic twin-arginine motif in their signal peptide across the thylakoid membrane. Involved in delta pH-dependent protein transport required for chloroplast development, especially thylakoid membrane formation. TATC and TATB mediate precursor recognition, whereas TATA facilitates translocation. This chain is Sec-independent protein translocase protein TATB, chloroplastic, found in Zea mays (Maize).